A 183-amino-acid chain; its full sequence is Streptavidin (183 aa).

An N-terminal signal peptide occupies residues Met1–Ala24. Residues Ala37–Pro159 form the Avidin-like domain. Residues Tyr67 and Tyr78 each coordinate biotin. The Cell attachment site; atypical motif lies at Arg83–Asp85. Biotin contacts are provided by Trp116, Trp132, and Trp144.

Belongs to the avidin/streptavidin family. As to quaternary structure, homotetramer.

Its subcellular location is the secreted. In terms of biological role, the biological function of streptavidin is not known. Forms a strong non-covalent specific complex with biotin (one molecule of biotin per subunit of streptavidin). In Streptomyces avidinii, this protein is Streptavidin.